We begin with the raw amino-acid sequence, 966 residues long: Translation initiation factor IF-2 (966 aa).

Basic and acidic residues-rich tracts occupy residues 99-113 (KRDE…EAAD), 123-183 (EQAR…KAEE), 197-212 (DASR…RVAV), 220-249 (AADD…EAEA), and 266-277 (PSERKAEEKKAE). A disordered region spans residues 99–382 (KRDEAGADQH…NFQAPTEPVV (284 aa)). Residues 304–315 (AATTTTTTATTT) show a composition bias toward low complexity. Gly residues predominate over residues 346-359 (SSGGVGGWRGGPRG). Residues 466–635 (PRPPVVTVMG…LLQAEVLELK (170 aa)) enclose the tr-type G domain. The G1 stretch occupies residues 475 to 482 (GHVDHGKT). 475 to 482 (GHVDHGKT) lines the GTP pocket. The G2 stretch occupies residues 500 to 504 (GITQH). A G3 region spans residues 521–524 (DTPG). GTP-binding positions include 521–525 (DTPGH) and 575–578 (NKID). The G4 stretch occupies residues 575–578 (NKID). A G5 region spans residues 611–613 (SAK).

The protein belongs to the TRAFAC class translation factor GTPase superfamily. Classic translation factor GTPase family. IF-2 subfamily.

It is found in the cytoplasm. Functionally, one of the essential components for the initiation of protein synthesis. Protects formylmethionyl-tRNA from spontaneous hydrolysis and promotes its binding to the 30S ribosomal subunits. Also involved in the hydrolysis of GTP during the formation of the 70S ribosomal complex. This chain is Translation initiation factor IF-2, found in Cupriavidus pinatubonensis (strain JMP 134 / LMG 1197) (Cupriavidus necator (strain JMP 134)).